We begin with the raw amino-acid sequence, 317 residues long: Ribosomal RNA small subunit methyltransferase H (317 aa).

Residues 30–32, Asp50, Tyr78, Asp95, and Gln102 each bind S-adenosyl-L-methionine; that span reads GGH.

The protein belongs to the methyltransferase superfamily. RsmH family.

The protein localises to the cytoplasm. It catalyses the reaction cytidine(1402) in 16S rRNA + S-adenosyl-L-methionine = N(4)-methylcytidine(1402) in 16S rRNA + S-adenosyl-L-homocysteine + H(+). Its function is as follows. Specifically methylates the N4 position of cytidine in position 1402 (C1402) of 16S rRNA. This is Ribosomal RNA small subunit methyltransferase H from Nitrosomonas eutropha (strain DSM 101675 / C91 / Nm57).